The sequence spans 316 residues: Ribose-phosphate pyrophosphokinase (316 aa).

ATP-binding positions include 42–44 (DGE) and 101–102 (RQ). 2 residues coordinate Mg(2+): His-135 and Asp-174. Lys-197 is a catalytic residue. Residues Arg-199, Asp-223, and 227-231 (DTAGT) each bind D-ribose 5-phosphate.

The protein belongs to the ribose-phosphate pyrophosphokinase family. Class I subfamily. As to quaternary structure, homohexamer. It depends on Mg(2+) as a cofactor.

It is found in the cytoplasm. It carries out the reaction D-ribose 5-phosphate + ATP = 5-phospho-alpha-D-ribose 1-diphosphate + AMP + H(+). Its pathway is metabolic intermediate biosynthesis; 5-phospho-alpha-D-ribose 1-diphosphate biosynthesis; 5-phospho-alpha-D-ribose 1-diphosphate from D-ribose 5-phosphate (route I): step 1/1. Its function is as follows. Involved in the biosynthesis of the central metabolite phospho-alpha-D-ribosyl-1-pyrophosphate (PRPP) via the transfer of pyrophosphoryl group from ATP to 1-hydroxyl of ribose-5-phosphate (Rib-5-P). The chain is Ribose-phosphate pyrophosphokinase from Halalkalibacterium halodurans (strain ATCC BAA-125 / DSM 18197 / FERM 7344 / JCM 9153 / C-125) (Bacillus halodurans).